Here is a 230-residue protein sequence, read N- to C-terminus: 5'-methylthioadenosine/S-adenosylhomocysteine nucleosidase (230 aa).

The Proton acceptor role is filled by Glu12. Residues Gly78, Ile153, and 174–175 (ME) contribute to the substrate site. Asp198 serves as the catalytic Proton donor.

The protein belongs to the PNP/UDP phosphorylase family. MtnN subfamily.

The catalysed reaction is S-adenosyl-L-homocysteine + H2O = S-(5-deoxy-D-ribos-5-yl)-L-homocysteine + adenine. The enzyme catalyses S-methyl-5'-thioadenosine + H2O = 5-(methylsulfanyl)-D-ribose + adenine. It carries out the reaction 5'-deoxyadenosine + H2O = 5-deoxy-D-ribose + adenine. Its pathway is amino-acid biosynthesis; L-methionine biosynthesis via salvage pathway; S-methyl-5-thio-alpha-D-ribose 1-phosphate from S-methyl-5'-thioadenosine (hydrolase route): step 1/2. Its function is as follows. Catalyzes the irreversible cleavage of the glycosidic bond in both 5'-methylthioadenosine (MTA) and S-adenosylhomocysteine (SAH/AdoHcy) to adenine and the corresponding thioribose, 5'-methylthioribose and S-ribosylhomocysteine, respectively. Also cleaves 5'-deoxyadenosine, a toxic by-product of radical S-adenosylmethionine (SAM) enzymes, into 5-deoxyribose and adenine. This is 5'-methylthioadenosine/S-adenosylhomocysteine nucleosidase from Shewanella piezotolerans (strain WP3 / JCM 13877).